The following is a 109-amino-acid chain: Small ribosomal subunit protein uS17 (109 aa).

This sequence belongs to the universal ribosomal protein uS17 family. Part of the 30S ribosomal subunit.

In terms of biological role, one of the primary rRNA binding proteins, it binds specifically to the 5'-end of 16S ribosomal RNA. The protein is Small ribosomal subunit protein uS17 of Methanococcus vannielii.